Reading from the N-terminus, the 182-residue chain is MASKNSASLALFFALNILFFTLTAGTNCRCNPSPKPRPLPNPKVPSPKVPTPSVPSPYVPTPSVPSPSVPTPSVPSPSVPSPNPTPVIPPRTPGSSGNCPIDALRLGVCANVLSGLLNVQLGQPSPQPCCSLIQGLVDLDAAVCLCTALRANVLGINLNVPISLSVLLNVCNRRLPSNFQCA.

The N-terminal stretch at 1–25 is a signal peptide; sequence MASKNSASLALFFALNILFFTLTAG. Positions 33–92 are enriched in pro residues; it reads SPKPRPLPNPKVPSPKVPTPSVPSPYVPTPSVPSPSVPTPSVPSPSVPSPNPTPVIPPRT. Positions 33 to 94 are disordered; sequence SPKPRPLPNP…TPVIPPRTPG (62 aa). 7 repeat units span residues 42-46, 47-51, 52-56, 62-66, 67-71, 72-76, and 77-81. The segment at 42 to 81 is 7 X 5 AA repeats of P-[KS]-V-P-[ST]; it reads PKVPSPKVPTPSVPSPYVPTPSVPSPSVPTPSVPSPSVPS.

This sequence belongs to the plant LTP family. PEARLI1 subfamily.

The protein resides in the secreted. It is found in the cell wall. In terms of biological role, probable lipid transfer protein (LTP). May improve freezing survival. Seems to control the flowering process and lignin synthesis. Confers resistance to Botrytis cinerea. In Arabidopsis thaliana (Mouse-ear cress), this protein is pEARLI1-like lipid transfer protein 2.